A 186-amino-acid chain; its full sequence is dCTP deaminase (186 aa).

Residue 107–112 coordinates dCTP; it reads KSTYAR. Glutamate 133 (proton donor/acceptor) is an active-site residue. The dCTP site is built by glutamine 152, tyrosine 166, lysine 175, and glutamine 176.

This sequence belongs to the dCTP deaminase family. Homotrimer.

It catalyses the reaction dCTP + H2O + H(+) = dUTP + NH4(+). It participates in pyrimidine metabolism; dUMP biosynthesis; dUMP from dCTP (dUTP route): step 1/2. Catalyzes the deamination of dCTP to dUTP. This is dCTP deaminase from Wolinella succinogenes (strain ATCC 29543 / DSM 1740 / CCUG 13145 / JCM 31913 / LMG 7466 / NCTC 11488 / FDC 602W) (Vibrio succinogenes).